The following is a 1044-amino-acid chain: GRB10-interacting GYF protein 1 (1044 aa).

4 positions are modified to phosphoserine: Ser-24, Ser-28, Ser-137, and Ser-157. 2 disordered regions span residues 104–290 (GKGA…DGLP) and 306–424 (ASGA…LEDE). Composition is skewed to basic and acidic residues over residues 148–179 (NPRE…RSGF) and 186–203 (PRKE…SLRE). At Ser-228 the chain carries Phosphoserine. Basic and acidic residues-rich tracts occupy residues 237 to 265 (GWRE…EDGR) and 316 to 332 (GPKE…FRGL). Acidic residues predominate over residues 333-350 (EEEEEEEEEPSEGVDEER). Ser-343 carries the phosphoserine modification. The span at 366–379 (NSSSPSSLPALGPL) shows a compositional bias: low complexity. Basic and acidic residues predominate over residues 389 to 403 (AVEKELPPAEGDELR). Ser-408 is modified (phosphoserine). One can recognise a GYF domain in the interval 476 to 524 (ARKWFYKDPQGEIQGPFTTQEMAEWFQAGYFSMSLLVKRGCDEGFQPLG). Phosphoserine is present on residues Ser-540 and Ser-634. The span at 692–706 (KREEEERKRREEKRR) shows a compositional bias: basic and acidic residues. 6 disordered regions span residues 692-721 (KREE…RQEE), 820-842 (EAGP…LGLW), 855-883 (SLGL…RKKT), 966-987 (QKAS…QEAW), 1000-1019 (NHST…RALM), and 1024-1044 (PSIL…VDDY). Over residues 829 to 839 (DKSGGSSGGNL) the composition is skewed to gly residues. 2 stretches are compositionally biased toward low complexity: residues 855–877 (SLGL…LSGR) and 970–984 (QQRQ…QQQQ). Phosphoserine is present on Ser-863.

Belongs to the GIGYF family. As to quaternary structure, interacts with GRB10. This transient binding is increased under IGF1 stimulation and leads to recruitment of GIGYF1/GRB10 complex to IGF1 receptor. Interacts with DDX6. Ubiquitous. Lower expression in skeletal muscle, liver and testis.

Functionally, may act cooperatively with GRB10 to regulate tyrosine kinase receptor signaling. May increase IGF1 receptor phosphorylation under IGF1 stimulation as well as phosphorylation of IRS1 and SHC1. The protein is GRB10-interacting GYF protein 1 (Gigyf1) of Mus musculus (Mouse).